A 281-amino-acid polypeptide reads, in one-letter code: Ornithine lipid ester-linked acyl 2-hydroxylase (281 aa).

The segment covering 1–24 has biased composition (polar residues); it reads MTESPLSAPAPTSNQSPAPEQTFG. The segment at 1–29 is disordered; it reads MTESPLSAPAPTSNQSPAPEQTFGTAGIA.

It belongs to the aspartyl/asparaginyl beta-hydroxylase family.

The catalysed reaction is an N(2)-[(3R)-3-(2-saturated-acyloxy)acyl]-L-ornithine lipid + 2-oxoglutarate + O2 = a 2-hydroxyornithine lipid + succinate + CO2. Its pathway is lipid metabolism. In terms of biological role, involved in the biosynthesis of ornithine lipids (OLs), which are phosphorus-free membrane lipids. Catalyzes the hydroxylation at the 2 position of the secondary fatty acid of OL. Contributes to symbiotic performance and acid tolerance. This chain is Ornithine lipid ester-linked acyl 2-hydroxylase, found in Rhizobium tropici.